The following is a 321-amino-acid chain: Lipoyl synthase (321 aa).

7 residues coordinate [4Fe-4S] cluster: Cys-68, Cys-73, Cys-79, Cys-94, Cys-98, Cys-101, and Ser-308. The region spanning 80–297 (FNHGTATFMI…KAEAMAMGFT (218 aa)) is the Radical SAM core domain.

Belongs to the radical SAM superfamily. Lipoyl synthase family. The cofactor is [4Fe-4S] cluster.

The protein localises to the cytoplasm. The catalysed reaction is [[Fe-S] cluster scaffold protein carrying a second [4Fe-4S](2+) cluster] + N(6)-octanoyl-L-lysyl-[protein] + 2 oxidized [2Fe-2S]-[ferredoxin] + 2 S-adenosyl-L-methionine + 4 H(+) = [[Fe-S] cluster scaffold protein] + N(6)-[(R)-dihydrolipoyl]-L-lysyl-[protein] + 4 Fe(3+) + 2 hydrogen sulfide + 2 5'-deoxyadenosine + 2 L-methionine + 2 reduced [2Fe-2S]-[ferredoxin]. The protein operates within protein modification; protein lipoylation via endogenous pathway; protein N(6)-(lipoyl)lysine from octanoyl-[acyl-carrier-protein]: step 2/2. Functionally, catalyzes the radical-mediated insertion of two sulfur atoms into the C-6 and C-8 positions of the octanoyl moiety bound to the lipoyl domains of lipoate-dependent enzymes, thereby converting the octanoylated domains into lipoylated derivatives. This Cronobacter sakazakii (strain ATCC BAA-894) (Enterobacter sakazakii) protein is Lipoyl synthase.